Consider the following 707-residue polypeptide: Polyribonucleotide nucleotidyltransferase (707 aa).

The Mg(2+) site is built by D484 and D490. A KH domain is found at 551–610 (PRVVRMVVNPEKIRDIIGPAGKTITKIISETGVKIDIEEDGRLYITAPNLEAGERAKQMI). One can recognise an S1 motif domain in the interval 620–688 (GGIYLGKVLR…KLGRIVLSRK (69 aa)). The tract at residues 688 to 707 (KDAMPDEEESDNRKSDNRKK) is disordered. Positions 698-707 (DNRKSDNRKK) are enriched in basic and acidic residues.

It belongs to the polyribonucleotide nucleotidyltransferase family. Mg(2+) serves as cofactor.

It is found in the cytoplasm. It carries out the reaction RNA(n+1) + phosphate = RNA(n) + a ribonucleoside 5'-diphosphate. Functionally, involved in mRNA degradation. Catalyzes the phosphorolysis of single-stranded polyribonucleotides processively in the 3'- to 5'-direction. The protein is Polyribonucleotide nucleotidyltransferase of Caldanaerobacter subterraneus subsp. tengcongensis (strain DSM 15242 / JCM 11007 / NBRC 100824 / MB4) (Thermoanaerobacter tengcongensis).